We begin with the raw amino-acid sequence, 415 residues long: Serine hydroxymethyltransferase (415 aa).

(6S)-5,6,7,8-tetrahydrofolate-binding positions include Leu-117 and 121-123 (GHL). Position 226 is an N6-(pyridoxal phosphate)lysine (Lys-226).

It belongs to the SHMT family. As to quaternary structure, homodimer. Pyridoxal 5'-phosphate is required as a cofactor.

The protein resides in the cytoplasm. It carries out the reaction (6R)-5,10-methylene-5,6,7,8-tetrahydrofolate + glycine + H2O = (6S)-5,6,7,8-tetrahydrofolate + L-serine. The protein operates within one-carbon metabolism; tetrahydrofolate interconversion. It functions in the pathway amino-acid biosynthesis; glycine biosynthesis; glycine from L-serine: step 1/1. In terms of biological role, catalyzes the reversible interconversion of serine and glycine with tetrahydrofolate (THF) serving as the one-carbon carrier. This reaction serves as the major source of one-carbon groups required for the biosynthesis of purines, thymidylate, methionine, and other important biomolecules. Also exhibits THF-independent aldolase activity toward beta-hydroxyamino acids, producing glycine and aldehydes, via a retro-aldol mechanism. The protein is Serine hydroxymethyltransferase of Dehalococcoides mccartyi (strain ATCC BAA-2266 / KCTC 15142 / 195) (Dehalococcoides ethenogenes (strain 195)).